Reading from the N-terminus, the 109-residue chain is Aquaporin-2 (109 aa).

Residues 1-6 (SVAFSR) are Cytoplasmic-facing. A helical membrane pass occupies residues 7-27 (AVLAEFLATLIFVFFGLGSAL). At 28–35 (SWPQALPS) the chain is on the extracellular side. The chain crosses the membrane as a helical span at residues 36–54 (VLQIALAFGLAIGTLVQAL). Residues 55 to 59 (GHVSG) are Cytoplasmic-facing. The discontinuously helical intramembrane region spans 60 to 69 (AHINPAVTVA). Positions 63-65 (NPA) match the NPA 1 motif. Residues 70-80 (CLVGCHVSFLR) are Cytoplasmic-facing. A helical transmembrane segment spans residues 81 to 102 (AAFYVAAQLLGAVAGAAILHEI). Topologically, residues 103–109 (TPPDVRG) are extracellular.

Belongs to the MIP/aquaporin (TC 1.A.8) family. Homotetramer. Post-translationally, serine phosphorylation is necessary and sufficient for expression at the apical membrane. Endocytosis is not phosphorylation-dependent. N-glycosylated.

Its subcellular location is the apical cell membrane. It localises to the basolateral cell membrane. It is found in the cell membrane. The protein localises to the cytoplasmic vesicle membrane. The protein resides in the golgi apparatus. Its subcellular location is the trans-Golgi network membrane. The enzyme catalyses H2O(in) = H2O(out). It catalyses the reaction glycerol(in) = glycerol(out). Forms a water-specific channel that provides the plasma membranes of renal collecting duct with high permeability to water, thereby permitting water to move in the direction of an osmotic gradient. Plays an essential role in renal water homeostasis. Could also be permeable to glycerol. The chain is Aquaporin-2 from Dasypus novemcinctus (Nine-banded armadillo).